Consider the following 152-residue polypeptide: 6,7-dimethyl-8-ribityllumazine synthase (152 aa).

5-amino-6-(D-ribitylamino)uracil is bound by residues Phe24, 56 to 58, and 80 to 82; these read SFE and VVV. (2S)-2-hydroxy-3-oxobutyl phosphate is bound at residue 85–86; the sequence is ET. His88 (proton donor) is an active-site residue. Residue Phe113 participates in 5-amino-6-(D-ribitylamino)uracil binding. Residue Arg127 participates in (2S)-2-hydroxy-3-oxobutyl phosphate binding.

It belongs to the DMRL synthase family.

The enzyme catalyses (2S)-2-hydroxy-3-oxobutyl phosphate + 5-amino-6-(D-ribitylamino)uracil = 6,7-dimethyl-8-(1-D-ribityl)lumazine + phosphate + 2 H2O + H(+). It functions in the pathway cofactor biosynthesis; riboflavin biosynthesis; riboflavin from 2-hydroxy-3-oxobutyl phosphate and 5-amino-6-(D-ribitylamino)uracil: step 1/2. Its function is as follows. Catalyzes the formation of 6,7-dimethyl-8-ribityllumazine by condensation of 5-amino-6-(D-ribitylamino)uracil with 3,4-dihydroxy-2-butanone 4-phosphate. This is the penultimate step in the biosynthesis of riboflavin. In Thermococcus onnurineus (strain NA1), this protein is 6,7-dimethyl-8-ribityllumazine synthase.